Here is a 289-residue protein sequence, read N- to C-terminus: MLRDLFVKKKKYAAIPSEQVRKDVPDGVMTKCPKCKKIMYTKEVLKNLKVCVNCGYHHPMNAWERLDSILDEGSFREYDKEMVSLNPLEFPDYEEKLESDRKKTELNEAVVTGEGTIDDMLVVVAVMDSRFRMGSMGSVVGEKIARAVEKAYDLQVPFIIFTASGGARMQEGILSLMQMAKTSVALKKHSNAGGLFISVMTHPTTGGVSASFASLGDYNLAEPGALIGFAGRRVIEQTVREKLPEDFQTAEFLLEHGQLDAVVHRDDMRESLRKILEVHQGGEMAVWQS.

The region spanning 28–289 (VMTKCPKCKK…QGGEMAVWQS (262 aa)) is the CoA carboxyltransferase N-terminal domain. Zn(2+)-binding residues include Cys-32, Cys-35, Cys-51, and Cys-54. The C4-type zinc finger occupies 32–54 (CPKCKKIMYTKEVLKNLKVCVNC).

Belongs to the AccD/PCCB family. Acetyl-CoA carboxylase is a heterohexamer composed of biotin carboxyl carrier protein (AccB), biotin carboxylase (AccC) and two subunits each of ACCase subunit alpha (AccA) and ACCase subunit beta (AccD). Zn(2+) serves as cofactor.

Its subcellular location is the cytoplasm. The catalysed reaction is N(6)-carboxybiotinyl-L-lysyl-[protein] + acetyl-CoA = N(6)-biotinyl-L-lysyl-[protein] + malonyl-CoA. It participates in lipid metabolism; malonyl-CoA biosynthesis; malonyl-CoA from acetyl-CoA: step 1/1. Functionally, component of the acetyl coenzyme A carboxylase (ACC) complex. Biotin carboxylase (BC) catalyzes the carboxylation of biotin on its carrier protein (BCCP) and then the CO(2) group is transferred by the transcarboxylase to acetyl-CoA to form malonyl-CoA. This chain is Acetyl-coenzyme A carboxylase carboxyl transferase subunit beta, found in Bacillus thuringiensis subsp. konkukian (strain 97-27).